We begin with the raw amino-acid sequence, 170 residues long: Peptide deformylase (170 aa).

2 residues coordinate Fe cation: Cys-91 and His-133. Residue Glu-134 is part of the active site. His-137 is a binding site for Fe cation.

It belongs to the polypeptide deformylase family. Fe(2+) serves as cofactor.

It carries out the reaction N-terminal N-formyl-L-methionyl-[peptide] + H2O = N-terminal L-methionyl-[peptide] + formate. Removes the formyl group from the N-terminal Met of newly synthesized proteins. Requires at least a dipeptide for an efficient rate of reaction. N-terminal L-methionine is a prerequisite for activity but the enzyme has broad specificity at other positions. The polypeptide is Peptide deformylase (Pasteurella multocida (strain Pm70)).